A 635-amino-acid chain; its full sequence is Kelch-like protein 31 (635 aa).

One can recognise a BTB domain in the interval 74-138; it reads CDLTVATKSK…AYSGKLTLSL (65 aa). Residues 173-274 form the BACK domain; that stretch reads CMYVVNIADT…TPQDLVSHVQ (102 aa). Kelch repeat units lie at residues 318-366, 367-420, 421-467, 469-514, 516-566, and 567-615; these read VLLT…VLDG, FLYV…TFNG, LLFA…VIDG, ILVS…TVGD, AYVL…TLNN, and KIYL…VVTI.

As to expression, strongly expressed in fast skeletal muscle, and weakly in heart. Not expressed in other tissues.

The protein is Kelch-like protein 31 (klhl31) of Danio rerio (Zebrafish).